Here is a 520-residue protein sequence, read N- to C-terminus: Cyclic AMP-responsive element-binding protein 3-like protein 2 (520 aa).

Over 1-378 the chain is Cytoplasmic; the sequence is MEVLESGEQG…CKLAGTQTGT (378 aa). Ser-93 carries the post-translational modification Phosphoserine. Lys-178 is covalently cross-linked (Glycyl lysine isopeptide (Lys-Gly) (interchain with G-Cter in SUMO2)). Ser-191 bears the Phosphoserine mark. Residues 195-264 are disordered; that stretch reads APVDHLHLPP…PHKLQGSGPL (70 aa). Composition is skewed to low complexity over residues 208 to 220 and 234 to 255; these read SSHG…SLSP and SPSR…LTAP. A bZIP domain is found at 294 to 357; the sequence is ALKKIRRKIK…RTLLQQLQKL (64 aa). Positions 296–325 are basic motif; that stretch reads KKIRRKIKNKISAQESRRKKKEYMDSLEKK. The tract at residues 336–357 is leucine-zipper; it reads LRKKVEVLENTNRTLLQQLQKL. A helical; Signal-anchor for type II membrane protein membrane pass occupies residues 379 to 399; it reads CLMVVVLCFAVAFGSFFQGYG. Topologically, residues 400–520 are lumenal; the sequence is PYPSATKMAL…ELDRRVNTTF (121 aa). Positions 427-430 match the S1P recognition motif; the sequence is RNLL. N-linked (GlcNAc...) asparagine glycosylation is found at Asn-480, Asn-504, and Asn-517.

Belongs to the bZIP family. ATF subfamily. In terms of assembly, binds DNA as a dimer. Upon ER stress, translocated to the Golgi apparatus, where it is processed by regulated intramembrane proteolysis (RIP) to release the cytosol-facing N-terminal transcription factor domain. The cleavage is performed sequentially by site-1 and site-2 proteases (S1P/MBTPS1 and S2P/MBTPS2). In terms of processing, N-glycosylated. Post-translationally, ubiquitinated by HRD1/SYVN1; undergoes 'Lys-48'-linked ubiquitination, followed by rapid proteasomal degradation under normal conditions. Upon ER stress, SYVN1 E3 ubiquitin-protein ligase dissociates from its substrate, ubiquitination does not occur and CREB3L2 is stabilized.

The protein localises to the endoplasmic reticulum membrane. It is found in the nucleus. Functionally, transcription factor involved in unfolded protein response (UPR). In the absence of endoplasmic reticulum (ER) stress, inserted into ER membranes, with N-terminal DNA-binding and transcription activation domains oriented toward the cytosolic face of the membrane. In response to ER stress, transported to the Golgi, where it is cleaved in a site-specific manner by resident proteases S1P/MBTPS1 and S2P/MBTPS2. The released N-terminal cytosolic domain is translocated to the nucleus to effect transcription of specific target genes. Plays a critical role in chondrogenesis by activating the transcription of SEC23A, which promotes the transport and secretion of cartilage matrix proteins, and possibly that of ER biogenesis-related genes. In a neuroblastoma cell line, protects cells from ER stress-induced death. In vitro activates transcription of target genes via direct binding to the CRE site. The sequence is that of Cyclic AMP-responsive element-binding protein 3-like protein 2 (CREB3L2) from Pongo abelii (Sumatran orangutan).